Here is a 384-residue protein sequence, read N- to C-terminus: Chaperone protein DnaJ (384 aa).

Positions 4 to 68 constitute a J domain; that stretch reads DFYDVLGVSR…EKRQMYDQLG (65 aa). Disordered stretches follow at residues 74 to 105 and 113 to 132; these read QAQKRGAGGGGGGRGQGNPFGGGGNPFGGMGG and NNLFNGGGGQRRSRPQQGRD. Positions 79-105 are enriched in gly residues; the sequence is GAGGGGGGRGQGNPFGGGGNPFGGMGG. Residues 147-229 form a CR-type zinc finger; that stretch reads GVERDVTIRR…CRGSGRVRRT (83 aa). Positions 160, 163, 177, 180, 203, 206, 217, and 220 each coordinate Zn(2+). CXXCXGXG motif repeat units follow at residues 160–167, 177–184, 203–210, and 217–224; these read CPECDGEG, CSECNGSG, CRACGGEG, and CSECRGSG.

This sequence belongs to the DnaJ family. In terms of assembly, homodimer. Zn(2+) serves as cofactor.

The protein localises to the cytoplasm. Participates actively in the response to hyperosmotic and heat shock by preventing the aggregation of stress-denatured proteins and by disaggregating proteins, also in an autonomous, DnaK-independent fashion. Unfolded proteins bind initially to DnaJ; upon interaction with the DnaJ-bound protein, DnaK hydrolyzes its bound ATP, resulting in the formation of a stable complex. GrpE releases ADP from DnaK; ATP binding to DnaK triggers the release of the substrate protein, thus completing the reaction cycle. Several rounds of ATP-dependent interactions between DnaJ, DnaK and GrpE are required for fully efficient folding. Also involved, together with DnaK and GrpE, in the DNA replication of plasmids through activation of initiation proteins. The polypeptide is Chaperone protein DnaJ (Haloferax mediterranei (strain ATCC 33500 / DSM 1411 / JCM 8866 / NBRC 14739 / NCIMB 2177 / R-4) (Halobacterium mediterranei)).